The primary structure comprises 89 residues: Protein S100-A8 (89 aa).

Ala2 is subject to N-acetylalanine. EF-hand domains are found at residues Ile13–Asn48 and Val46–Ala81. Zn(2+)-binding residues include His17 and His27. Position 33 (Asp33) interacts with Ca(2+). S-nitrosocysteine is present on Cys42. The Ca(2+) site is built by Asp59, Asn61, Asp63, and Glu70. His83 serves as a coordination point for Zn(2+).

The protein belongs to the S-100 family. In terms of assembly, homodimer. Preferentially exists as a heterodimer or heterotetramer with S100A9 known as calprotectin (S100A8/A9). S100A8 interacts with AGER, ATP2A2 and with the heterodimeric complex formed by TLR4 and LY96. Calprotectin (S100A8/9) interacts with CEACAM3 and tubulin filaments in a calcium-dependent manner. Heterotetrameric calprotectin (S100A8/A9) interacts with ANXA6 and associates with tubulin filaments in activated monocytes. S100A8 and calprotectin (S100A8/9) interact with NCF2/P67PHOX, RAC1 and RAC2. Calprotectin (S100A8/9) interacts with CYBA and CYBB. Calprotectin (S100A8/9) interacts with NOS2 to form the iNOS-S100A8/A9 transnitrosylase complex. Calprotectin (S100A8/9) interacts with CD69.

It is found in the secreted. Its subcellular location is the cytoplasm. The protein localises to the cytoskeleton. It localises to the cell membrane. In terms of biological role, S100A8 is a calcium- and zinc-binding protein which plays a prominent role in the regulation of inflammatory processes and immune response. It can induce neutrophil chemotaxis and adhesion. Predominantly found as calprotectin (S100A8/A9) which has a wide plethora of intra- and extracellular functions. The intracellular functions include: facilitating leukocyte arachidonic acid trafficking and metabolism, modulation of the tubulin-dependent cytoskeleton during migration of phagocytes and activation of the neutrophilic NADPH-oxidase. Also participates in regulatory T-cell differentiation together with CD69. Activates NADPH-oxidase by facilitating the enzyme complex assembly at the cell membrane, transferring arachidonic acid, an essential cofactor, to the enzyme complex and S100A8 contributes to the enzyme assembly by directly binding to NCF2/P67PHOX. The extracellular functions involve pro-inflammatory, antimicrobial, oxidant-scavenging and apoptosis-inducing activities. Its pro-inflammatory activity includes recruitment of leukocytes, promotion of cytokine and chemokine production, and regulation of leukocyte adhesion and migration. Acts as an alarmin or a danger associated molecular pattern (DAMP) molecule and stimulates innate immune cells via binding to pattern recognition receptors such as Toll-like receptor 4 (TLR4) and receptor for advanced glycation endproducts (AGER). Binding to TLR4 and AGER activates the MAP-kinase and NF-kappa-B signaling pathways resulting in the amplification of the pro-inflammatory cascade. Has antimicrobial activity towards bacteria and fungi and exerts its antimicrobial activity probably via chelation of Zn(2+) which is essential for microbial growth. Can induce cell death via autophagy and apoptosis and this occurs through the cross-talk of mitochondria and lysosomes via reactive oxygen species (ROS) and the process involves BNIP3. Can regulate neutrophil number and apoptosis by an anti-apoptotic effect; regulates cell survival via ITGAM/ITGB and TLR4 and a signaling mechanism involving MEK-ERK. Its role as an oxidant scavenger has a protective role in preventing exaggerated tissue damage by scavenging oxidants. The iNOS-S100A8/A9 transnitrosylase complex is proposed to direct selective inflammatory stimulus-dependent S-nitrosylation of multiple targets such as GAPDH, ANXA5, EZR, MSN and VIM by recognizing a [IL]-x-C-x-x-[DE] motif; S100A8 seems to contribute to S-nitrosylation site selectivity. The polypeptide is Protein S100-A8 (S100a8) (Rattus norvegicus (Rat)).